Reading from the N-terminus, the 365-residue chain is Aminomethyltransferase (365 aa).

The protein belongs to the GcvT family. The glycine cleavage system is composed of four proteins: P, T, L and H.

The catalysed reaction is N(6)-[(R)-S(8)-aminomethyldihydrolipoyl]-L-lysyl-[protein] + (6S)-5,6,7,8-tetrahydrofolate = N(6)-[(R)-dihydrolipoyl]-L-lysyl-[protein] + (6R)-5,10-methylene-5,6,7,8-tetrahydrofolate + NH4(+). Functionally, the glycine cleavage system catalyzes the degradation of glycine. The polypeptide is Aminomethyltransferase (Yersinia pseudotuberculosis serotype O:1b (strain IP 31758)).